A 619-amino-acid chain; its full sequence is tRNA uridine 5-carboxymethylaminomethyl modification enzyme MnmG (619 aa).

Residues 14–19 (GAGHAG), Val126, and Ser181 contribute to the FAD site. An NAD(+)-binding site is contributed by 273 to 287 (GPRYCPSIEDKIMRF). Gln370 serves as a coordination point for FAD.

The protein belongs to the MnmG family. As to quaternary structure, homodimer. Heterotetramer of two MnmE and two MnmG subunits. The cofactor is FAD.

The protein resides in the cytoplasm. In terms of biological role, NAD-binding protein involved in the addition of a carboxymethylaminomethyl (cmnm) group at the wobble position (U34) of certain tRNAs, forming tRNA-cmnm(5)s(2)U34. The chain is tRNA uridine 5-carboxymethylaminomethyl modification enzyme MnmG from Syntrophotalea carbinolica (strain DSM 2380 / NBRC 103641 / GraBd1) (Pelobacter carbinolicus).